A 410-amino-acid chain; its full sequence is Pectate lyase PEL9 (410 aa).

The signal sequence occupies residues 1–18 (MMGKSVWVFAALFPAVLA). 4 residues coordinate Ca(2+): D191, D215, D216, and D219. The N-linked (GlcNAc...) asparagine glycan is linked to N234. The active-site Proton acceptor is K271. A compositionally biased stretch (polar residues) spans 342 to 351 (GEAPTSLSDE). Disordered stretches follow at residues 342-361 (GEAPTSLSDEQISDGNSWDG) and 381-410 (ERNADGTIEPSGFLLPADGEEIGATTDWSA).

The protein belongs to the polysaccharide lyase 9 family. The cofactor is Ca(2+).

It localises to the secreted. It catalyses the reaction Eliminative cleavage of (1-&gt;4)-alpha-D-galacturonan to give oligosaccharides with 4-deoxy-alpha-D-galact-4-enuronosyl groups at their non-reducing ends.. Its activity is regulated as follows. Inhibited by iron ions. Activated in presence of the surfactant polysorbate 20, while inhibited in the presence of Triton X-100 and sodium dodecyl sulfate. Inhibited in presence of the organic solvents methanol, ethanol, propan-2-ol and acetone. Its function is as follows. Presents an endo-cleaving activity on the homogalacturonan (HG) region in pectin. Active on homogalacturonan with a degree of polymerization above 4, and does not appear to be affected by the degree of methylation of the substrate. Does not degrade linear rhamnogalacturonan. The protein is Pectate lyase PEL9 of Emericella nidulans (strain FGSC A4 / ATCC 38163 / CBS 112.46 / NRRL 194 / M139) (Aspergillus nidulans).